The sequence spans 375 residues: Serpin B5 (375 aa).

N-linked (GlcNAc...) asparagine glycans are attached at residues asparagine 99, asparagine 133, asparagine 155, asparagine 188, and asparagine 361.

It belongs to the serpin family. Ov-serpin subfamily. In terms of assembly, interacts with IRF6.

Its subcellular location is the secreted. It localises to the extracellular space. Tumor suppressor. It blocks the growth, invasion, and metastatic properties of mammary tumors. As it does not undergo the S (stressed) to R (relaxed) conformational transition characteristic of active serpins, it exhibits no serine protease inhibitory activity. In Plecturocebus moloch (Dusky titi monkey), this protein is Serpin B5 (SERPINB5).